A 162-amino-acid chain; its full sequence is Ribosomal RNA large subunit methyltransferase H (162 aa).

Residue glycine 108 coordinates S-adenosyl-L-methionine.

The protein belongs to the RNA methyltransferase RlmH family. In terms of assembly, homodimer.

The protein resides in the cytoplasm. The enzyme catalyses pseudouridine(1915) in 23S rRNA + S-adenosyl-L-methionine = N(3)-methylpseudouridine(1915) in 23S rRNA + S-adenosyl-L-homocysteine + H(+). Its function is as follows. Specifically methylates the pseudouridine at position 1915 (m3Psi1915) in 23S rRNA. The polypeptide is Ribosomal RNA large subunit methyltransferase H (Methylobacterium nodulans (strain LMG 21967 / CNCM I-2342 / ORS 2060)).